We begin with the raw amino-acid sequence, 88 residues long: Beta-insect excitatory toxin LqhIT1b (88 aa).

An N-terminal signal peptide occupies residues 1-18 (MKFFLLFLVVLPIMGVLG). The region spanning 20 to 83 (KNGYAVDSKG…ISDTTKKYCD (64 aa)) is the LCN-type CS-alpha/beta domain. 4 disulfides stabilise this stretch: cysteine 34–cysteine 55, cysteine 40–cysteine 60, cysteine 44–cysteine 62, and cysteine 56–cysteine 82.

The protein belongs to the long (4 C-C) scorpion toxin superfamily. Sodium channel inhibitor family. Beta subfamily. In terms of tissue distribution, expressed by the venom gland.

It localises to the secreted. Functionally, excitatory insect toxins induce a spastic paralysis. They bind voltage-independently at site-4 of sodium channels (Nav) and shift the voltage of activation toward more negative potentials thereby affecting sodium channel activation and promoting spontaneous and repetitive firing. The sequence is that of Beta-insect excitatory toxin LqhIT1b from Leiurus hebraeus (Hebrew deathstalker scorpion).